Consider the following 941-residue polypeptide: Bifunctional glutamine synthetase adenylyltransferase/adenylyl-removing enzyme (941 aa).

Residues 1–431 (MSSAPPFAAA…TFRNAFRLAG (431 aa)) are adenylyl removase. The segment at 447 to 941 (NGHGMRPHAG…DGTIAQAEVK (495 aa)) is adenylyl transferase.

The protein belongs to the GlnE family. Requires Mg(2+) as cofactor.

It carries out the reaction [glutamine synthetase]-O(4)-(5'-adenylyl)-L-tyrosine + phosphate = [glutamine synthetase]-L-tyrosine + ADP. The catalysed reaction is [glutamine synthetase]-L-tyrosine + ATP = [glutamine synthetase]-O(4)-(5'-adenylyl)-L-tyrosine + diphosphate. Functionally, involved in the regulation of glutamine synthetase GlnA, a key enzyme in the process to assimilate ammonia. When cellular nitrogen levels are high, the C-terminal adenylyl transferase (AT) inactivates GlnA by covalent transfer of an adenylyl group from ATP to specific tyrosine residue of GlnA, thus reducing its activity. Conversely, when nitrogen levels are low, the N-terminal adenylyl removase (AR) activates GlnA by removing the adenylyl group by phosphorolysis, increasing its activity. The regulatory region of GlnE binds the signal transduction protein PII (GlnB) which indicates the nitrogen status of the cell. This Bordetella bronchiseptica (strain ATCC BAA-588 / NCTC 13252 / RB50) (Alcaligenes bronchisepticus) protein is Bifunctional glutamine synthetase adenylyltransferase/adenylyl-removing enzyme.